The chain runs to 478 residues: Lipoprotein lipase (478 aa).

The signal sequence occupies residues 1-27 (MESKALLLVALSVWLQSLIVSREGLAT). The segment at 35-56 (RDFTDIESKFALRTPEDTVEDT) is interaction with GPIHBP1. C57 and C70 form a disulfide bridge. An N-linked (GlcNAc...) asparagine glycan is attached at N73. Residue Y124 is modified to 3'-nitrotyrosine. S162 acts as the Nucleophile in catalysis. D186 serves as the catalytic Charge relay system. Y194 is subject to 3'-nitrotyrosine. Ca(2+) contacts are provided by A197, R200, S202, and D205. A disulfide bridge connects residues C246 and C269. The interval 246–269 (CNIGEAIRVIAERGLGDVDQLVKC) is essential for determining substrate specificity. H271 (charge relay system) is an active-site residue. Intrachain disulfides connect C294–C313 and C305–C308. Residues 344–467 (FHYQVKMRFS…KGKSSVVFVK (124 aa)) form the PLAT domain. Y346 is subject to 3'-nitrotyrosine. A glycan (N-linked (GlcNAc...) asparagine) is linked at N389. The tract at residues 420–424 (WSNWW) is important for interaction with lipoprotein particles. Positions 433-437 (KIRVK) are important for heparin binding. The interval 446–470 (IFCSREKKSHLQKGKSSVVFVKCHD) is interaction with GPIHBP1. C448 and C468 are disulfide-bonded.

It belongs to the AB hydrolase superfamily. Lipase family. Homodimer. Interacts with GPIHBP1 with 1:1 stoichiometry. Interacts with APOC2; the interaction activates LPL activity in the presence of lipids. Interaction with heparan sulfate proteoglycans is required to protect LPL against loss of activity. Associates with lipoprotein particles in blood plasma. Interacts with LMF1 and SEL1L; interaction with SEL1L is required to prevent aggregation of newly synthesized LPL in the endoplasmic reticulum (ER), and for normal export of LPL from the ER to the extracellular space. Interacts with SORL1; SORL1 acts as a sorting receptor, promoting LPL localization to endosomes and later to lysosomes, leading to degradation of newly synthesized LPL. Tyrosine nitration after lipopolysaccharide (LPS) challenge down-regulates the lipase activity.

The protein resides in the cell membrane. The protein localises to the secreted. It is found in the extracellular space. It localises to the extracellular matrix. It catalyses the reaction a triacylglycerol + H2O = a diacylglycerol + a fatty acid + H(+). The catalysed reaction is a 1,2-diacyl-sn-glycero-3-phosphocholine + H2O = a 2-acyl-sn-glycero-3-phosphocholine + a fatty acid + H(+). It carries out the reaction 1,2,3-tri-(9Z-octadecenoyl)-glycerol + H2O = di-(9Z)-octadecenoylglycerol + (9Z)-octadecenoate + H(+). The enzyme catalyses 1,2-di-(9Z-octadecenoyl)-sn-glycero-3-phosphocholine + H2O = (9Z-octadecenoyl)-sn-glycero-3-phosphocholine + (9Z)-octadecenoate + H(+). It catalyses the reaction 1,2,3-tributanoylglycerol + H2O = dibutanoylglycerol + butanoate + H(+). The catalysed reaction is 1,2-dihexadecanoyl-sn-glycero-3-phosphocholine + H2O = hexadecanoyl-sn-glycero-3-phosphocholine + hexadecanoate + H(+). The apolipoprotein APOC2 acts as a coactivator of LPL activity. Ca(2+) binding promotes protein stability and formation of the active homodimer. Interaction with GPIHBP1 protects LPL against inactivation by ANGPTL4. Key enzyme in triglyceride metabolism. Catalyzes the hydrolysis of triglycerides from circulating chylomicrons and very low density lipoproteins (VLDL), and thereby plays an important role in lipid clearance from the blood stream, lipid utilization and storage. Although it has both phospholipase and triglyceride lipase activities it is primarily a triglyceride lipase with low but detectable phospholipase activity. Mediates margination of triglyceride-rich lipoprotein particles in capillaries. Recruited to its site of action on the luminal surface of vascular endothelium by binding to GPIHBP1 and cell surface heparan sulfate proteoglycans. The sequence is that of Lipoprotein lipase (LPL) from Sus scrofa (Pig).